We begin with the raw amino-acid sequence, 598 residues long: F-box/WD repeat-containing protein 8 (598 aa).

Position 1 is an N-acetylmethionine (M1). The disordered stretch occupies residues 17–93 (LAQAQAPKKR…RSPLAREGAG (77 aa)). Positions 29–40 (PEAAERRARRPE) are enriched in basic and acidic residues. Residues 61–71 (EGAGRPPAARA) are compositionally biased toward low complexity. A phosphoserine mark is found at S83 and S85. One can recognise an F-box domain in the interval 113–159 (PFFDIQLPYELAINIFQYLDRKELGRCAQVSKTWKVIAEDEVLWYRL). WD repeat units follow at residues 201–250 (AVSE…LESE), 259–299 (QPNV…FEHD), 300–340 (ARIQ…AEFE), 341–383 (VPKL…LLYA), 384–429 (HGPP…LKLG), 430–475 (NVLR…SAHQ), 476–513 (LRVS…EVYS), and 514–561 (GHPV…AYEF).

Component of the Cul7-RING(FBXW8) complex consisting of CUL7, RBX1, SKP1 and FBXW8; within the complex interacts with CUL7 and SKP1. Interacts with GLMN isoform 1. Interacts with OBSL1, CUL1, CUL2, CCT6B, PFDN5, CCT2, CCT3, CCT6A, CCT7, VBP1, CCDC8, ARF1, TRIP13, PDCD5 and GORASP1. Interacts with MAP4K1/HPK1 (when autophosphorylated). Associated component of the 3M complex. Interacts with POUF51 (when phosphorylated on 'Ser-355'). In terms of processing, phosphorylation at Ser-85 by mTORC2 promotes FBXW8 stabilization, allowing its translocation to the cytosol in response to insulin.

The protein localises to the cytoplasm. Its subcellular location is the perinuclear region. It localises to the golgi apparatus. The protein operates within protein modification; protein ubiquitination. In terms of biological role, substrate-recognition component of the Cul7-RING(FBXW8) ubiquitin ligase complex, which mediates the ubiquitination and subsequent proteasomal degradation of target proteins. The Cul7-RING(FBXW8) complex mediates ubiquitination and consequent degradation of GORASP1, acting as a component of the ubiquitin ligase pathway that regulates Golgi morphogenesis and dendrite patterning in brain. Mediates ubiquitination and degradation of IRS1 in a mTOR-dependent manner: the Cul7-RING(FBXW8) complex recognizes and binds IRS1 previously phosphorylated by S6 kinase (RPS6KB1 or RPS6KB2). The Cul7-RING(FBXW8) complex also mediates ubiquitination of MAP4K1/HPK1: recognizes and binds autophosphorylated MAP4K1/HPK1, leading to its degradation, thereby affecting cell proliferation and differentiation. The Cul7-RING(FBXW8) complex also mediates ubiquitination of phosphorylated cyclin-D1 (CCND1). The Cul7-RING(FBXW8) complex is however not a major regulator of CCND1 stability during the G1/S transition. Associated component of the 3M complex, suggesting that it mediates some of 3M complex functions. In Homo sapiens (Human), this protein is F-box/WD repeat-containing protein 8.